A 125-amino-acid chain; its full sequence is Small ribosomal subunit protein uS12m (125 aa).

Disordered regions lie at residues 1-29 and 105-125; these read MPTKNQLIRHGREEKQRTDRTRASDQCPQ and LGIPDRRKGRSKYGAERPKSK. Over residues 10-23 the composition is skewed to basic and acidic residues; sequence HGREEKQRTDRTRA.

It belongs to the universal ribosomal protein uS12 family.

It is found in the mitochondrion. Functionally, protein S12 is involved in the translation initiation step. In Oryza sativa subsp. japonica (Rice), this protein is Small ribosomal subunit protein uS12m (RPS12).